A 278-amino-acid chain; its full sequence is Formyltetrahydrofolate deformylase (278 aa).

One can recognise an ACT domain in the interval 6–85; sequence ILLTDCPDDK…RLIGTQRKRI (80 aa). Asp-223 is a catalytic residue.

This sequence belongs to the PurU family.

It carries out the reaction (6R)-10-formyltetrahydrofolate + H2O = (6S)-5,6,7,8-tetrahydrofolate + formate + H(+). Its pathway is purine metabolism; IMP biosynthesis via de novo pathway; formate from 10-formyl-5,6,7,8-tetrahydrofolate: step 1/1. Its function is as follows. Catalyzes the hydrolysis of 10-formyltetrahydrofolate (formyl-FH4) to formate and tetrahydrofolate (FH4). In Haemophilus influenzae (strain ATCC 51907 / DSM 11121 / KW20 / Rd), this protein is Formyltetrahydrofolate deformylase.